The chain runs to 132 residues: Glycine cleavage system H protein (132 aa).

A Lipoyl-binding domain is found at 24–106 (IATIGLSAHA…YEEGWFIKVR (83 aa)). At Lys65 the chain carries N6-lipoyllysine.

This sequence belongs to the GcvH family. In terms of assembly, the glycine cleavage system is composed of four proteins: P, T, L and H. It depends on (R)-lipoate as a cofactor.

The glycine cleavage system catalyzes the degradation of glycine. The H protein shuttles the methylamine group of glycine from the P protein to the T protein. This Picosynechococcus sp. (strain ATCC 27264 / PCC 7002 / PR-6) (Agmenellum quadruplicatum) protein is Glycine cleavage system H protein.